The sequence spans 70 residues: Putative membrane protein insertion efficiency factor (70 aa).

It belongs to the UPF0161 family.

The protein resides in the cell membrane. Functionally, could be involved in insertion of integral membrane proteins into the membrane. This is Putative membrane protein insertion efficiency factor from Chloroflexus aurantiacus (strain ATCC 29366 / DSM 635 / J-10-fl).